Consider the following 536-residue polypeptide: CTP synthase (536 aa).

The interval 1-268 (MKSKFIFITG…GKVLCKLFNI (268 aa)) is amidoligase domain. Serine 14 provides a ligand contact to CTP. Residue serine 14 coordinates UTP. Residue 15 to 20 (SLGKGL) participates in ATP binding. An L-glutamine-binding site is contributed by tyrosine 55. ATP is bound at residue aspartate 72. Residues aspartate 72 and glutamate 142 each coordinate Mg(2+). Residues 149-151 (DIE), 189-194 (KTKPMQ), and lysine 225 contribute to the CTP site. Residues 189-194 (KTKPMQ) and lysine 225 contribute to the UTP site. The 243-residue stretch at 293 to 535 (TIALVGKYVE…IKAAVDNKIN (243 aa)) folds into the Glutamine amidotransferase type-1 domain. Glycine 356 is an L-glutamine binding site. Residue cysteine 383 is the Nucleophile; for glutamine hydrolysis of the active site. Residues 384 to 387 (LGMQ), glutamate 407, and arginine 463 each bind L-glutamine. Active-site residues include histidine 508 and glutamate 510.

It belongs to the CTP synthase family. As to quaternary structure, homotetramer.

It catalyses the reaction UTP + L-glutamine + ATP + H2O = CTP + L-glutamate + ADP + phosphate + 2 H(+). It carries out the reaction L-glutamine + H2O = L-glutamate + NH4(+). The catalysed reaction is UTP + NH4(+) + ATP = CTP + ADP + phosphate + 2 H(+). It participates in pyrimidine metabolism; CTP biosynthesis via de novo pathway; CTP from UDP: step 2/2. Its activity is regulated as follows. Allosterically activated by GTP, when glutamine is the substrate; GTP has no effect on the reaction when ammonia is the substrate. The allosteric effector GTP functions by stabilizing the protein conformation that binds the tetrahedral intermediate(s) formed during glutamine hydrolysis. Inhibited by the product CTP, via allosteric rather than competitive inhibition. In terms of biological role, catalyzes the ATP-dependent amination of UTP to CTP with either L-glutamine or ammonia as the source of nitrogen. Regulates intracellular CTP levels through interactions with the four ribonucleotide triphosphates. This is CTP synthase from Treponema denticola (strain ATCC 35405 / DSM 14222 / CIP 103919 / JCM 8153 / KCTC 15104).